Here is a 302-residue protein sequence, read N- to C-terminus: MPGLWRQRLPSAWALLLLPFLPLLMPAAPAAHRGSYKPVIVVHGLFDSSYSFRHLLDYINETHTGTVVTVLDLFDGRESLRPLWEQVQGFREAVVPIMEKAPEGVHLICYSQGGLVCRALLSVMDNHNVDSFISLSSPQMGQYGDTDYLKWLFPTSMRSNLYRVCYSPWGQEFSICNYWHDPHHDDLYLNASSFLALINGERDHPNATAWRKNFLRVGRLVLIGGPDDGVITPWQSSFFGFYDANETVLEMEEQPVYLRDSFGLKTLLARGAIVRCPMAGISHTTWHSNRTLYDTCIEPWLS.

An N-terminal signal peptide occupies residues 1–27 (MPGLWRQRLPSAWALLLLPFLPLLMPA). Asparagine 60 carries an N-linked (GlcNAc...) asparagine glycan. Cystine bridges form between cysteine 109–cysteine 117 and cysteine 165–cysteine 176. The active-site Nucleophile is the serine 111. 2 N-linked (GlcNAc...) asparagine glycosylation sites follow: asparagine 190 and asparagine 206. Aspartate 228 is a catalytic residue. N-linked (GlcNAc...) asparagine glycosylation is present at asparagine 245. Cysteine 276 and cysteine 296 are joined by a disulfide. Residue histidine 283 is part of the active site. Asparagine 289 carries an N-linked (GlcNAc...) asparagine glycan.

Belongs to the palmitoyl-protein thioesterase family. Expressed throughout the brain, primarily in neurons, and at lower levels in glial cells.

The protein resides in the lysosome. It carries out the reaction hexadecanoyl-CoA + H2O = hexadecanoate + CoA + H(+). The catalysed reaction is S-hexadecanoyl-N-acetylcysteamine + H2O = N-acetylcysteamine + hexadecanoate + H(+). Functionally, catalyzes the cleavage of thioester bonds from S-palmitoyl-CoA or S-palmitoyl-N-acetylcysteamine (unbranched structures) but does not have activity against palmitoylcysteine or palmitoylated proteins, branched structures or bulky head groups. Conversely, hydrolyzes both long and short chain fatty acyl-CoA substrate. This chain is Lysosomal thioesterase PPT2 (Ppt2), found in Mus musculus (Mouse).